The chain runs to 475 residues: Sulfate adenylyltransferase subunit 1 (475 aa).

The tr-type G domain occupies 25–239; sequence KSLLRFLTCG…EVLETVEIQR (215 aa). A G1 region spans residues 34–41; the sequence is GSVDDGKS. 34–41 contacts GTP; sequence GSVDDGKS. Residues 92-96 are G2; sequence GITID. Residues 113 to 116 form a G3 region; the sequence is DTPG. Residues 113 to 117 and 168 to 171 contribute to the GTP site; these read DTPGH and NKMD. A G4 region spans residues 168 to 171; sequence NKMD. Residues 206–208 form a G5 region; it reads SAL.

Belongs to the TRAFAC class translation factor GTPase superfamily. Classic translation factor GTPase family. CysN/NodQ subfamily. As to quaternary structure, heterodimer composed of CysD, the smaller subunit, and CysN.

The catalysed reaction is sulfate + ATP + H(+) = adenosine 5'-phosphosulfate + diphosphate. It functions in the pathway sulfur metabolism; hydrogen sulfide biosynthesis; sulfite from sulfate: step 1/3. Its function is as follows. With CysD forms the ATP sulfurylase (ATPS) that catalyzes the adenylation of sulfate producing adenosine 5'-phosphosulfate (APS) and diphosphate, the first enzymatic step in sulfur assimilation pathway. APS synthesis involves the formation of a high-energy phosphoric-sulfuric acid anhydride bond driven by GTP hydrolysis by CysN coupled to ATP hydrolysis by CysD. This chain is Sulfate adenylyltransferase subunit 1, found in Shigella dysenteriae serotype 1 (strain Sd197).